The following is a 244-amino-acid chain: Phosphoadenosine 5'-phosphosulfate reductase (244 aa).

Catalysis depends on Cys-239, which acts as the Nucleophile; cysteine thiosulfonate intermediate.

This sequence belongs to the PAPS reductase family. CysH subfamily.

It localises to the cytoplasm. It catalyses the reaction [thioredoxin]-disulfide + sulfite + adenosine 3',5'-bisphosphate + 2 H(+) = [thioredoxin]-dithiol + 3'-phosphoadenylyl sulfate. The protein operates within sulfur metabolism; hydrogen sulfide biosynthesis; sulfite from sulfate: step 3/3. Functionally, catalyzes the formation of sulfite from phosphoadenosine 5'-phosphosulfate (PAPS) using thioredoxin as an electron donor. The chain is Phosphoadenosine 5'-phosphosulfate reductase from Salmonella choleraesuis (strain SC-B67).